The following is a 72-amino-acid chain: MAEFRRRRAKLRVKAEEIDYKNVELLKRFVSDKGKINPSRLTGANAKLQRKIAKAVKRARNIALIPYTRTEK.

Belongs to the bacterial ribosomal protein bS18 family. As to quaternary structure, part of the 30S ribosomal subunit. Forms a tight heterodimer with protein bS6.

Binds as a heterodimer with protein bS6 to the central domain of the 16S rRNA, where it helps stabilize the platform of the 30S subunit. This chain is Small ribosomal subunit protein bS18, found in Fusobacterium nucleatum subsp. nucleatum (strain ATCC 25586 / DSM 15643 / BCRC 10681 / CIP 101130 / JCM 8532 / KCTC 2640 / LMG 13131 / VPI 4355).